The sequence spans 314 residues: Solute carrier family 25 member 44 (314 aa).

3 Solcar repeats span residues 18–100, 107–210, and 220–302; these read KKFY…TRKF, SNTV…YAEQ, and PHIV…LKKL. 6 helical membrane-spanning segments follow: residues 20-42, 71-90, 113-133, 185-201, 222-239, and 278-296; these read FYVFGVAMTMMIRVSVYPFTLIR, AGLYRGFLVNTFTLISGQCY, LVAGGSASLVAQSITVPIDVV, GYVASLLTYIPNSAVWW, IVFQAISGPLAAATASIL, and LSARIISATPSTIVIVVGY.

It belongs to the mitochondrial carrier (TC 2.A.29) family. As to expression, highly expressed in brown adipose tissues compared with other metabolic organs.

It is found in the mitochondrion membrane. The enzyme catalyses L-valine(in) = L-valine(out). The catalysed reaction is L-leucine(in) = L-leucine(out). Functionally, mitochondrial solute transporter which transports branched-chain amino acid (BCAA; valine, leucine and isoleucine) into mitochondria in brown adipose tissue (BAT). BAT is involved in BCAA catabolism and actively utilizes BCAA in the mitochondria for thermogenesis. The sequence is that of Solute carrier family 25 member 44 from Mus musculus (Mouse).